A 236-amino-acid chain; its full sequence is Small ribosomal subunit protein uS3 (236 aa).

Residues 39–107 (IREFLTEELK…DTSLNIVEVR (69 aa)) form the KH type-2 domain. Positions 214 to 236 (ASERRAVEGDNQGSSSNRRRENA) are disordered.

Belongs to the universal ribosomal protein uS3 family. Part of the 30S ribosomal subunit. Forms a tight complex with proteins S10 and S14.

In terms of biological role, binds the lower part of the 30S subunit head. Binds mRNA in the 70S ribosome, positioning it for translation. This is Small ribosomal subunit protein uS3 from Brucella suis (strain ATCC 23445 / NCTC 10510).